The sequence spans 480 residues: Probable histone deacetylase 1-A (480 aa).

The tract at residues 10–321 (KVCYYYDGDV…WTYETAVALD (312 aa)) is histone deacetylase. Histidine 141 is an active-site residue. Residues 388-480 (SIHDDSGEED…KRVKEETKSV (93 aa)) form a disordered region. Over residues 401–416 (PDKRISIRSSDKRIAC) the composition is skewed to basic and acidic residues. Over residues 417–427 (DEEFSDSEDEG) the composition is skewed to acidic residues. A compositionally biased stretch (basic and acidic residues) spans 443 to 480 (VKTEEEKEGEDKKDVKEEEKAKDEKTDSKRVKEETKSV).

Belongs to the histone deacetylase family. HD type 1 subfamily. In terms of assembly, part of a large multiprotein complex that also contains RBBP4. In terms of tissue distribution, oocyte.

The protein localises to the nucleus. It is found in the cytoplasm. The enzyme catalyses N(6)-acetyl-L-lysyl-[histone] + H2O = L-lysyl-[histone] + acetate. It catalyses the reaction N(6)-acetyl-L-lysyl-[protein] + H2O = L-lysyl-[protein] + acetate. The catalysed reaction is N(6)-(2E)-butenoyl-L-lysyl-[protein] + H2O = (2E)-2-butenoate + L-lysyl-[protein]. In terms of biological role, histone deacetylase that catalyzes the deacetylation of lysine residues on the N-terminal part of the core histones (H2A, H2B, H3 and H4). Histone deacetylation gives a tag for epigenetic repression and plays an important role in transcriptional regulation, cell cycle progression and developmental events. Histone deacetylases act via the formation of large multiprotein complexes. Also functions as deacetylase for non-histone proteins. In addition to protein deacetylase activity, also has protein-lysine deacylase activity: acts as a protein decrotonylase by mediating decrotonylation ((2E)-butenoyl) of histones. This chain is Probable histone deacetylase 1-A (hdac1-a), found in Xenopus laevis (African clawed frog).